The chain runs to 274 residues: Large ribosomal subunit protein uL2 (274 aa).

Disordered regions lie at residues 28–55 and 224–274; these read APHAPLLEKKSKSGGRNNNGRITTRHVG and VAMN…RRRK. Residues 263-274 show a composition bias toward basic and acidic residues; sequence KRTDKMIVRRRK.

It belongs to the universal ribosomal protein uL2 family. Part of the 50S ribosomal subunit. Forms a bridge to the 30S subunit in the 70S ribosome.

Its function is as follows. One of the primary rRNA binding proteins. Required for association of the 30S and 50S subunits to form the 70S ribosome, for tRNA binding and peptide bond formation. It has been suggested to have peptidyltransferase activity; this is somewhat controversial. Makes several contacts with the 16S rRNA in the 70S ribosome. The polypeptide is Large ribosomal subunit protein uL2 (Pseudomonas fluorescens (strain ATCC BAA-477 / NRRL B-23932 / Pf-5)).